The primary structure comprises 1213 residues: DNA-directed RNA polymerase subunit beta' (1213 aa).

Residues cysteine 60, cysteine 62, cysteine 75, and cysteine 78 each contribute to the Zn(2+) site. Residues aspartate 450, aspartate 452, and aspartate 454 each coordinate Mg(2+). Residues cysteine 819, cysteine 893, cysteine 900, and cysteine 903 each contribute to the Zn(2+) site.

Belongs to the RNA polymerase beta' chain family. As to quaternary structure, the RNAP catalytic core consists of 2 alpha, 1 beta, 1 beta' and 1 omega subunit. When a sigma factor is associated with the core the holoenzyme is formed, which can initiate transcription. Mg(2+) serves as cofactor. It depends on Zn(2+) as a cofactor.

The enzyme catalyses RNA(n) + a ribonucleoside 5'-triphosphate = RNA(n+1) + diphosphate. Its function is as follows. DNA-dependent RNA polymerase catalyzes the transcription of DNA into RNA using the four ribonucleoside triphosphates as substrates. The sequence is that of DNA-directed RNA polymerase subunit beta' from Streptococcus pyogenes serotype M18 (strain MGAS8232).